The sequence spans 276 residues: Rhomboid protease GlpG (276 aa).

A run of 6 helical transmembrane segments spans residues 94–114 (GPVT…MQIL), 142–162 (ALMH…WYLG), 169–189 (LGSG…GYVQ), 192–212 (FSGP…GYVW), 229–249 (LIIF…GMSM), and 250–270 (ANGA…VDSL). Residue S201 is the Nucleophile of the active site. Residue H254 is part of the active site.

The protein belongs to the peptidase S54 family.

It localises to the cell inner membrane. It catalyses the reaction Cleaves type-1 transmembrane domains using a catalytic dyad composed of serine and histidine that are contributed by different transmembrane domains.. Its function is as follows. Rhomboid-type serine protease that catalyzes intramembrane proteolysis. This Escherichia coli O157:H7 protein is Rhomboid protease GlpG.